Consider the following 65-residue polypeptide: Large ribosomal subunit protein bL35 (65 aa).

Composition is skewed to basic residues over residues 1–16 and 31–45; these read MPKMKTHRASAKRFKK and HRFHGKTKKQRRQLR. The interval 1 to 47 is disordered; that stretch reads MPKMKTHRASAKRFKKTANGGLKSASAYTSHRFHGKTKKQRRQLRGT.

This sequence belongs to the bacterial ribosomal protein bL35 family.

The protein is Large ribosomal subunit protein bL35 of Leuconostoc citreum (strain KM20).